A 172-amino-acid polypeptide reads, in one-letter code: LOB domain-containing protein 4 (172 aa).

Positions 12–113 (SPCAACKLLR…AQLALAQAEV (102 aa)) constitute an LOB domain. The tract at residues 125–152 (PGHGLCPDSPSSSGSPSSKQVSPQDNKG) is disordered. Over residues 131–147 (PDSPSSSGSPSSKQVSP) the composition is skewed to low complexity.

This sequence belongs to the LOB domain-containing protein family. As to expression, expressed in young shoots, roots, stems, leaves and flowers.

This Arabidopsis thaliana (Mouse-ear cress) protein is LOB domain-containing protein 4 (LBD4).